Consider the following 166-residue polypeptide: uncharacterized protein (166 aa).

Over residues 73-88 (SKLNNNNNSNNNNKMA) the composition is skewed to low complexity. 2 disordered regions span residues 73–101 (SKLN…EKDK) and 126–166 (PQSS…EFNN). The segment covering 89 to 101 (VDNKDNKDNEKDK) has biased composition (basic and acidic residues). A compositionally biased stretch (low complexity) spans 134–154 (SPTHKSPSSSPKTISPVKVSP). Polar residues predominate over residues 155 to 166 (TSSPIKNPEFNN).

This is an uncharacterized protein from Dictyostelium discoideum (Social amoeba).